The primary structure comprises 661 residues: Sperm transmembrane protein 9 (661 aa).

A signal peptide spans 1–16; that stretch reads MNVILVLVVLFFAGDC. Residues 17 to 618 are Extracellular-facing; it reads AKIRKIIDFL…MTNRLMKNYE (602 aa). Positions 52 to 90 constitute an EGF-like 1 domain; that stretch reads NFNPCLENPKICSNRGKCLHENGNFYCICPVTHYGKTCE. 3 disulfides stabilise this stretch: cysteine 56–cysteine 69, cysteine 63–cysteine 78, and cysteine 80–cysteine 89. Asparagine 105, asparagine 106, asparagine 134, and asparagine 190 each carry an N-linked (GlcNAc...) asparagine glycan. One can recognise an EGF-like 2 domain in the interval 210–259; that stretch reads QISACFDTQCDNGGICEDVVDWKTKTVTATCKCPSAIELIGGTVTGENCE. Cystine bridges form between cysteine 214–cysteine 225, cysteine 219–cysteine 240, and cysteine 242–cysteine 258. N-linked (GlcNAc...) asparagine glycosylation is found at asparagine 279, asparagine 290, asparagine 316, and asparagine 338. The Cell attachment site signature appears at 377-379; sequence RGD. 3 EGF-like domains span residues 377–414, 519–557, and 559–600; these read RGDR…EKCE, HTNP…SLCE, and VDDS…LDCN. Intrachain disulfides connect cysteine 385–cysteine 402, cysteine 393–cysteine 404, cysteine 413–cysteine 419, cysteine 523–cysteine 534, cysteine 528–cysteine 545, cysteine 547–cysteine 556, cysteine 563–cysteine 576, cysteine 571–cysteine 588, and cysteine 590–cysteine 599. Asparagine 549 is a glycosylation site (N-linked (GlcNAc...) asparagine). Residues 619–639 traverse the membrane as a helical segment; it reads FSLPLVACFVSLAILLPVIVI. Over 640–661 the chain is Cytoplasmic; it reads SRRRQGRVEEAKKTSEVKTENP.

As to expression, expressed in spermatids, during spermogenesis expression is primarily localized to the pseudopod.

The protein resides in the cytoplasm. Its subcellular location is the membrane. Functionally, required for fertilization. May be required for cell adhesion and/or function as a signaling molecule. The chain is Sperm transmembrane protein 9 (spe-9) from Caenorhabditis elegans.